A 152-amino-acid chain; its full sequence is UPF0266 membrane protein PM0830 (152 aa).

The next 3 helical transmembrane spans lie at 1–21 (MMIINVLLCLGIFCFLLYAFY), 45–65 (KDALIFSLLIGIIIYQTYTNL), and 66–86 (SSATLYLLTALILLSVYAAFI).

The protein belongs to the UPF0266 family.

It is found in the cell inner membrane. This is UPF0266 membrane protein PM0830 from Pasteurella multocida (strain Pm70).